The sequence spans 379 residues: 3-dehydroquinate synthase (379 aa).

Residues 113 to 117, 137 to 138, lysine 150, and lysine 159 contribute to the NAD(+) site; these read GVIGD and TS. Residues glutamate 192, histidine 256, and histidine 274 each contribute to the Zn(2+) site.

This sequence belongs to the sugar phosphate cyclases superfamily. Dehydroquinate synthase family. Co(2+) serves as cofactor. Requires Zn(2+) as cofactor. It depends on NAD(+) as a cofactor.

Its subcellular location is the cytoplasm. It catalyses the reaction 7-phospho-2-dehydro-3-deoxy-D-arabino-heptonate = 3-dehydroquinate + phosphate. It functions in the pathway metabolic intermediate biosynthesis; chorismate biosynthesis; chorismate from D-erythrose 4-phosphate and phosphoenolpyruvate: step 2/7. In terms of biological role, catalyzes the conversion of 3-deoxy-D-arabino-heptulosonate 7-phosphate (DAHP) to dehydroquinate (DHQ). The polypeptide is 3-dehydroquinate synthase (Zymomonas mobilis subsp. mobilis (strain ATCC 31821 / ZM4 / CP4)).